A 293-amino-acid chain; its full sequence is N-acetylneuraminate lyase (293 aa).

Residues S47, T48, and Y136 each coordinate aceneuramate. Y136 functions as the Proton donor in the catalytic mechanism. The active-site Schiff-base intermediate with substrate is K164. T166, G188, D190, E191, S207, and Y251 together coordinate aceneuramate.

This sequence belongs to the DapA family. NanA subfamily. As to quaternary structure, homotetramer.

It localises to the cytoplasm. The enzyme catalyses aceneuramate = aldehydo-N-acetyl-D-mannosamine + pyruvate. The protein operates within amino-sugar metabolism; N-acetylneuraminate degradation; D-fructose 6-phosphate from N-acetylneuraminate: step 1/5. In terms of biological role, catalyzes the reversible aldol cleavage of N-acetylneuraminic acid (sialic acid; Neu5Ac) to form pyruvate and N-acetylmannosamine (ManNAc) via a Schiff base intermediate. This chain is N-acetylneuraminate lyase, found in Pasteurella multocida (strain Pm70).